A 219-amino-acid chain; its full sequence is MPIGVPKVPFRLPGEEDAVWVDIYNRLYRERLLFLGQRVDDEIANQLIGIMMYLNGEDDSKEMFMYINSPGGSVVAGIAVFDAMQYVGPDVTTICMGMAASMGSFILMGGEMTKRIALPHARVMIHQPASSYYDGQAGECLMEAEEVLKLRDCIAKVYMNRTGQPGWVIYRDMDRDIFMSALEAKSYGIVDLVGEDPTATPSVWFRWPSLLDSKDSNEK.

Serine 101 acts as the Nucleophile in catalysis. Histidine 126 is an active-site residue.

Belongs to the peptidase S14 family. In terms of assembly, component of the chloroplastic Clp protease core complex.

Its subcellular location is the plastid. The protein resides in the chloroplast stroma. The enzyme catalyses Hydrolysis of proteins to small peptides in the presence of ATP and magnesium. alpha-casein is the usual test substrate. In the absence of ATP, only oligopeptides shorter than five residues are hydrolyzed (such as succinyl-Leu-Tyr-|-NHMec, and Leu-Tyr-Leu-|-Tyr-Trp, in which cleavage of the -Tyr-|-Leu- and -Tyr-|-Trp bonds also occurs).. In terms of biological role, cleaves peptides in various proteins in a process that requires ATP hydrolysis. Has a chymotrypsin-like activity. Plays a major role in the degradation of misfolded proteins. This Chara vulgaris (Common stonewort) protein is ATP-dependent Clp protease proteolytic subunit.